We begin with the raw amino-acid sequence, 109 residues long: Phosphoribosyl-ATP pyrophosphatase (109 aa).

The protein belongs to the PRA-PH family.

The protein localises to the cytoplasm. It catalyses the reaction 1-(5-phospho-beta-D-ribosyl)-ATP + H2O = 1-(5-phospho-beta-D-ribosyl)-5'-AMP + diphosphate + H(+). It functions in the pathway amino-acid biosynthesis; L-histidine biosynthesis; L-histidine from 5-phospho-alpha-D-ribose 1-diphosphate: step 2/9. In Alkalilimnicola ehrlichii (strain ATCC BAA-1101 / DSM 17681 / MLHE-1), this protein is Phosphoribosyl-ATP pyrophosphatase.